The following is a 732-amino-acid chain: Conidiogenone synthase (732 aa).

Positions 1–311 (MADKITDEYA…SLCVPRYCKV (311 aa)) are terpene cyclase. Residue Asp-97 participates in Mg(2+) binding. Substrate is bound by residues Asp-97, 169–172 (RIVD), Asn-213, 217–221 (SWDKE), and 307–308 (RY). The DDXXD 1 motif lies at 97 to 101 (DALNQ). The short motif at 213–221 (NDLFSWDKE) is the NSE/DTE element. Residues 312–732 (DRNPYKDHLE…LRAMEETLQK (421 aa)) are prenyltransferase. The interval 348-370 (KQSELKDPSSSTYKSHFSPLEPN) is disordered. Positions 402, 405, and 434 each coordinate isopentenyl diphosphate. Mg(2+)-binding residues include Asp-441 and Asp-445. The DDXXD 2 motif lies at 441–445 (DDIQD). Dimethylallyl diphosphate is bound at residue Arg-450. Arg-451 serves as a coordination point for isopentenyl diphosphate. Dimethylallyl diphosphate-binding residues include Lys-529, Thr-530, Gln-565, Asn-572, Lys-582, and Lys-592.

In the N-terminal section; belongs to the terpene synthase family. The protein in the C-terminal section; belongs to the FPP/GGPP synthase family. In terms of assembly, hexamer. Mg(2+) serves as cofactor.

The enzyme catalyses isopentenyl diphosphate + (2E,6E)-farnesyl diphosphate = (2E,6E,10E)-geranylgeranyl diphosphate + diphosphate. It functions in the pathway secondary metabolite biosynthesis; terpenoid biosynthesis. Bifunctional terpene synthase; part of the gene cluster that mediates the biosynthesis of conidiogenone, a diterpene known to induce the conidiation. The bifunctional terpene synthase PchDS converts isopentenyl diphosphate (IPP) and dimethylallyl diphosphate (DMAPP) into deoxyconidiogenol. The C-terminal prenyltransferase (PT) domain of PchDS catalyzes formation of GGPP, whereas the N-terminal terpene cyclase (TC) domain catalyzes the cyclization of GGPP into deoxyconidiogenol. The cytochrome P450 monooxygenase PchP450 then catalyzes two rounds of oxidation to furnish conidiogenone. This is Conidiogenone synthase from Penicillium rubens (strain ATCC 28089 / DSM 1075 / NRRL 1951 / Wisconsin 54-1255) (Penicillium chrysogenum).